Consider the following 401-residue polypeptide: Imidazolonepropionase (401 aa).

2 residues coordinate Fe(3+): H70 and H72. Residues H70 and H72 each coordinate Zn(2+). Residues R79, Y142, and H175 each contribute to the 4-imidazolone-5-propanoate site. Y142 is a binding site for N-formimidoyl-L-glutamate. H238 is a Fe(3+) binding site. H238 contributes to the Zn(2+) binding site. Q241 contributes to the 4-imidazolone-5-propanoate binding site. D313 contributes to the Fe(3+) binding site. Residue D313 coordinates Zn(2+). N-formimidoyl-L-glutamate contacts are provided by N315 and G317. T318 is a 4-imidazolone-5-propanoate binding site.

It belongs to the metallo-dependent hydrolases superfamily. HutI family. Zn(2+) is required as a cofactor. The cofactor is Fe(3+).

The protein resides in the cytoplasm. The enzyme catalyses 4-imidazolone-5-propanoate + H2O = N-formimidoyl-L-glutamate. It participates in amino-acid degradation; L-histidine degradation into L-glutamate; N-formimidoyl-L-glutamate from L-histidine: step 3/3. In terms of biological role, catalyzes the hydrolytic cleavage of the carbon-nitrogen bond in imidazolone-5-propanoate to yield N-formimidoyl-L-glutamate. It is the third step in the universal histidine degradation pathway. This is Imidazolonepropionase from Xanthomonas oryzae pv. oryzae (strain MAFF 311018).